Consider the following 103-residue polypeptide: Small ribosomal subunit protein uS10 (103 aa).

It belongs to the universal ribosomal protein uS10 family. In terms of assembly, part of the 30S ribosomal subunit.

In terms of biological role, involved in the binding of tRNA to the ribosomes. The chain is Small ribosomal subunit protein uS10 from Campylobacter hominis (strain ATCC BAA-381 / DSM 21671 / CCUG 45161 / LMG 19568 / NCTC 13146 / CH001A).